A 202-amino-acid polypeptide reads, in one-letter code: MNFLRKIVKSCKDEEDQKPALVSAPPDDDDLWLPPPESVPLTEISGKKNMRNFCINGEVKICSPNGYSFKILRHILKSFDGIYSGNRRMIGLVKVVIGLALSGAPVPEGMNWVYKIRRTLVFQWAESRGPLDGEELEYSQEITWDDDSEFIGLQIRVSARQCHIQGRVWCINMNSRACQLWSDMSLKTQQSDEDKNTSLLLE.

The PPXY motif signature appears at 35-38 (PPES). The interval 115–151 (KIRRTLVFQWAESRGPLDGEELEYSQEITWDDDSEFI) is essential for glycoprotein binding.

This sequence belongs to the lyssavirus matrix protein family. In terms of assembly, homomultimer. Interacts with nucleoprotein and with the cytoplasmic domain of glycoprotein.

Its subcellular location is the virion membrane. It localises to the host endomembrane system. Its function is as follows. Plays a major role in assembly and budding of virion. Completely covers the ribonucleoprotein coil and keep it in condensed bullet-shaped form. Inhibits viral transcription and stimulates replication. Plays a major role in early induction of TRAIL-mediated apoptosis in infected neurons. The sequence is that of Matrix protein (M) from Myotis mystacinus (Whiskered bat).